A 174-amino-acid polypeptide reads, in one-letter code: Ribosome maturation factor RimM (174 aa).

The region spanning 98 to 171 (EGEFYFHEII…KIEIELMEGL (74 aa)) is the PRC barrel domain.

The protein belongs to the RimM family. Binds ribosomal protein uS19.

Its subcellular location is the cytoplasm. In terms of biological role, an accessory protein needed during the final step in the assembly of 30S ribosomal subunit, possibly for assembly of the head region. Essential for efficient processing of 16S rRNA. May be needed both before and after RbfA during the maturation of 16S rRNA. It has affinity for free ribosomal 30S subunits but not for 70S ribosomes. The sequence is that of Ribosome maturation factor RimM from Bacillus subtilis (strain 168).